Reading from the N-terminus, the 808-residue chain is MATRGSRSEKVKRIFQQFDGNHDGGLNREEMAALVVAVNPRVKFSDEQINAILDEVFRTYAEFIDPNKGLTYDGLLRTYDDGAGDVDRDFDALGLELNADETTIKGSEAASSSSITDERAVEAQKKQRTAAWAVSPNHGIVFDETWKLVDDLEILVKRLKSKQEKDGKLKADNNNNNVDAFSDAGWSRELGPSSEISEKRIYWEESSHDYGVFVKELGVLRSKADGARSREEAFDGHMAIGRVLYEHQLFKEALVSFKRACELQPTDVRPHFKAGNCLYVLGKCKESKDEFLLALEAAESGGNQWAYLLPQIYVNLGIALEGEGMVLSACEYYREAAILCPTHFRALKLLGSALFGVGEYRAAVKALEEAIYLKPDYADAHCDLASSLHSMGEDERAIEVFQRAIDLKPGHVDALYNLGGLYMDLGRFQRASEMYTRVLTVWPNHWRAQLNKAVSLLGAGETEEAKRALKEALKLTNRVELHDAISHLKHLQKKKGKNNGNGNGGEGPFIVVEPSKFKTVGEKTTLRPDLATALQIRAFQRVTRLGKCDVEAVRKEMRDNDVPVSYSGSGGPTKSIRKPNLEEILRRLLSSLKPDTFQGAIKAINEKILALLDDSGSGRVDMGMFYAVIAPLCGGHSDKRKRVAFDALLWRPVNEGSSQITKTDAVKYIKLLRAIYIPSHGMSEMLEVHGEEEAESSVTVTFNQFLAMFDDPDWGFGIMSTILKLEANDRNRHGNQVCSVCRYPVIGSRFKEVKARFSLCNQCYGEGKVPPSFKQEEYKFREYESEAEAMKAKCVCFSMQSHKKAIAT.

The EF-hand 1 domain maps to 6 to 41; the sequence is SRSEKVKRIFQQFDGNHDGGLNREEMAALVVAVNPR. TPR repeat units lie at residues 234-267, 269-301, 310-343, 344-377, 378-411, 412-445, and 447-479; these read FDGH…QPTD, RPHF…AESG, PQIY…CPTH, FRAL…KPDY, ADAH…KPGH, VDAL…WPNH, and RAQL…TNRV. Positions 600 to 635 constitute an EF-hand 2 domain; the sequence is AIKAINEKILALLDDSGSGRVDMGMFYAVIAPLCGG. The stretch at 773-794 forms a coiled coil; that stretch reads FKQEEYKFREYESEAEAMKAKC.

This is an uncharacterized protein from Arabidopsis thaliana (Mouse-ear cress).